Consider the following 405-residue polypeptide: Arginine biosynthesis bifunctional protein ArgJ (405 aa).

Substrate-binding residues include Thr-152, Lys-178, Thr-189, Glu-276, Asn-400, and Thr-405. Thr-189 functions as the Nucleophile in the catalytic mechanism.

The protein belongs to the ArgJ family. In terms of assembly, heterotetramer of two alpha and two beta chains.

It is found in the cytoplasm. The enzyme catalyses N(2)-acetyl-L-ornithine + L-glutamate = N-acetyl-L-glutamate + L-ornithine. The catalysed reaction is L-glutamate + acetyl-CoA = N-acetyl-L-glutamate + CoA + H(+). It participates in amino-acid biosynthesis; L-arginine biosynthesis; L-ornithine and N-acetyl-L-glutamate from L-glutamate and N(2)-acetyl-L-ornithine (cyclic): step 1/1. Its pathway is amino-acid biosynthesis; L-arginine biosynthesis; N(2)-acetyl-L-ornithine from L-glutamate: step 1/4. Its function is as follows. Catalyzes two activities which are involved in the cyclic version of arginine biosynthesis: the synthesis of N-acetylglutamate from glutamate and acetyl-CoA as the acetyl donor, and of ornithine by transacetylation between N(2)-acetylornithine and glutamate. This Pseudomonas putida (strain ATCC 47054 / DSM 6125 / CFBP 8728 / NCIMB 11950 / KT2440) protein is Arginine biosynthesis bifunctional protein ArgJ.